Here is a 268-residue protein sequence, read N- to C-terminus: Undecaprenyl-diphosphatase (268 aa).

The next 7 helical transmembrane spans lie at 43 to 63 (FWKT…LAIY), 85 to 105 (IGVL…GTFI), 108 to 128 (VLFN…VLLW), 141 to 161 (AMAF…AAMV), 184 to 204 (AAEF…VYDV), 217 to 237 (FIII…VKTF), and 246 to 266 (FTFF…ALAL).

Belongs to the UppP family.

It localises to the cell inner membrane. It catalyses the reaction di-trans,octa-cis-undecaprenyl diphosphate + H2O = di-trans,octa-cis-undecaprenyl phosphate + phosphate + H(+). Functionally, catalyzes the dephosphorylation of undecaprenyl diphosphate (UPP). Confers resistance to bacitracin. The sequence is that of Undecaprenyl-diphosphatase from Afipia carboxidovorans (strain ATCC 49405 / DSM 1227 / KCTC 32145 / OM5) (Oligotropha carboxidovorans).